A 150-amino-acid polypeptide reads, in one-letter code: Peptide deformylase 2 (150 aa).

2 residues coordinate Fe cation: Cys89 and His131. Residue Glu132 is part of the active site. A Fe cation-binding site is contributed by His135.

Belongs to the polypeptide deformylase family. Fe(2+) is required as a cofactor.

The enzyme catalyses N-terminal N-formyl-L-methionyl-[peptide] + H2O = N-terminal L-methionyl-[peptide] + formate. Its function is as follows. Removes the formyl group from the N-terminal Met of newly synthesized proteins. Requires at least a dipeptide for an efficient rate of reaction. N-terminal L-methionine is a prerequisite for activity but the enzyme has broad specificity at other positions. This Clostridium acetobutylicum (strain ATCC 824 / DSM 792 / JCM 1419 / IAM 19013 / LMG 5710 / NBRC 13948 / NRRL B-527 / VKM B-1787 / 2291 / W) protein is Peptide deformylase 2.